A 174-amino-acid chain; its full sequence is RNA pyrophosphohydrolase (174 aa).

The region spanning 14–167 (PYRPCVGLMV…KRKVYEEVVA (154 aa)) is the Nudix hydrolase domain. A Nudix box motif is present at residues 55-76 (GGIDKGEEPLEAAIRELYEETG).

It belongs to the Nudix hydrolase family. RppH subfamily. Requires a divalent metal cation as cofactor.

Its function is as follows. Accelerates the degradation of transcripts by removing pyrophosphate from the 5'-end of triphosphorylated RNA, leading to a more labile monophosphorylated state that can stimulate subsequent ribonuclease cleavage. This chain is RNA pyrophosphohydrolase, found in Brucella anthropi (strain ATCC 49188 / DSM 6882 / CCUG 24695 / JCM 21032 / LMG 3331 / NBRC 15819 / NCTC 12168 / Alc 37) (Ochrobactrum anthropi).